The following is a 323-amino-acid chain: Protein REDOX 2 (323 aa).

Aspartate 53 provides a ligand contact to NADP(+). The active-site Proton donor is the tyrosine 58. Histidine 121 contacts substrate. Residues 167–168, glutamine 189, 215–220, and 289–297 each bind NADP(+); these read SN, WSPLLS, and DQIHEIPQR. Positions 302–323 are disordered; sequence GEEFMHPEGPIKSPEELWDGDL.

This sequence belongs to the aldo/keto reductase family. In terms of assembly, monomer. Expressed in leaf epidermis.

It carries out the reaction 15alpha-stemmadenine + NADP(+) = 17-dehydrostemmadenine + NADPH + 2 H(+). Its pathway is alkaloid biosynthesis. Component of iboga and aspidosperma monoterpenoid indole alkaloids (MIAs, e.g. tabersonine and catharanthine) biosynthesis pathway from 19E-geissoschizine. Catalyzes the second oxidation step of the unstable intermediate product resulting from the reaction triggered by the geissoschizine oxidase (GO) in the stemmadenine biosynthesis process from 19E-geissoschizine. This chain is Protein REDOX 2, found in Catharanthus roseus (Madagascar periwinkle).